A 469-amino-acid chain; its full sequence is Trehalose-6-phosphate synthase (469 aa).

Arg-10 lines the D-glucose 6-phosphate pocket. UDP-alpha-D-glucose is bound at residue 22 to 23; that stretch reads GG. 2 residues coordinate D-glucose 6-phosphate: Tyr-77 and Asp-131. The UDP-alpha-D-glucose site is built by Arg-262 and Lys-267. A D-glucose 6-phosphate-binding site is contributed by Arg-300. UDP-alpha-D-glucose is bound at residue 365 to 369; the sequence is LVAKE.

Belongs to the glycosyltransferase 20 family. In terms of assembly, homotetramer.

The catalysed reaction is D-glucose 6-phosphate + UDP-alpha-D-glucose = alpha,alpha-trehalose 6-phosphate + UDP + H(+). It participates in glycan biosynthesis; trehalose biosynthesis. Its function is as follows. Probably involved in the osmoprotection via the biosynthesis of trehalose. Catalyzes the transfer of glucose from UDP-alpha-D-glucose (UDP-Glc) to D-glucose 6-phosphate (Glc-6-P) to form trehalose-6-phosphate. Acts with retention of the anomeric configuration of the UDP-sugar donor. This Sodalis glossinidius (strain morsitans) protein is Trehalose-6-phosphate synthase.